The chain runs to 52 residues: UPF0057 membrane protein YqaE (52 aa).

A run of 2 helical transmembrane segments spans residues 1–21 and 23–43; these read MGFW…LLGK and FGWA…PGLI.

It belongs to the UPF0057 (PMP3) family.

The protein localises to the cell membrane. This chain is UPF0057 membrane protein YqaE (yqaE), found in Escherichia coli O157:H7.